A 402-amino-acid polypeptide reads, in one-letter code: F-box/kelch-repeat protein At4g39590 (402 aa).

Positions 1-14 are enriched in low complexity; that stretch reads MFPMSSTSRSSAAN. Positions 1 to 37 are disordered; that stretch reads MFPMSSTSRSSAANNRKDPPRKKNKETPSPVTREPTS. Residues 27-37 show a composition bias toward polar residues; the sequence is TPSPVTREPTS. In terms of domain architecture, F-box spans 35 to 81; that stretch reads PTSIDSLPNDLLLNCFARVSRMYYPALSRVSKRFRSIVTSPEIYNTR. 4 Kelch repeats span residues 143 to 198, 199 to 246, 255 to 300, and 302 to 341; these read NIYR…VVDG, KIYV…YRRA, KLYL…LFYW, and QGVFKWYDSKVSSWKQLKGLEGLPDDFSQREYCKLVDLGG.

In Arabidopsis thaliana (Mouse-ear cress), this protein is F-box/kelch-repeat protein At4g39590.